The chain runs to 570 residues: A-type ATP synthase subunit A (570 aa).

223–230 contributes to the ATP binding site; that stretch reads GPFGSGKT.

It belongs to the ATPase alpha/beta chains family. As to quaternary structure, has multiple subunits with at least A(3), B(3), C, D, E, F, H, I and proteolipid K(x).

The protein localises to the cell membrane. It catalyses the reaction ATP + H2O + 4 H(+)(in) = ADP + phosphate + 5 H(+)(out). Its function is as follows. Component of the A-type ATP synthase that produces ATP from ADP in the presence of a proton gradient across the membrane. The A chain is the catalytic subunit. This is A-type ATP synthase subunit A from Nanoarchaeum equitans (strain Kin4-M).